The following is a 499-amino-acid chain: 3-octaprenyl-4-hydroxybenzoate carboxy-lyase (499 aa).

Asparagine 173 lines the Mn(2+) pocket. Prenylated FMN-binding positions include 176-178 (IYR), 190-192 (RWL), and 195-196 (RG). Glutamate 239 lines the Mn(2+) pocket. Aspartate 288 (proton donor) is an active-site residue.

This sequence belongs to the UbiD family. Homohexamer. Prenylated FMN is required as a cofactor. Requires Mn(2+) as cofactor.

The protein localises to the cell membrane. The enzyme catalyses a 4-hydroxy-3-(all-trans-polyprenyl)benzoate + H(+) = a 2-(all-trans-polyprenyl)phenol + CO2. It participates in cofactor biosynthesis; ubiquinone biosynthesis. Catalyzes the decarboxylation of 3-octaprenyl-4-hydroxy benzoate to 2-octaprenylphenol, an intermediate step in ubiquinone biosynthesis. This is 3-octaprenyl-4-hydroxybenzoate carboxy-lyase from Blochmanniella floridana.